The chain runs to 359 residues: Dual-specificity RNA methyltransferase RlmN (359 aa).

The Proton acceptor role is filled by Glu-102. The region spanning 108 to 351 (EKKRATLCIS…IRKNRGSDIQ (244 aa)) is the Radical SAM core domain. Cys-115 and Cys-354 are disulfide-bonded. Residues Cys-122, Cys-126, and Cys-129 each coordinate [4Fe-4S] cluster. Residues 178 to 179 (GE), Ser-210, 232 to 234 (SLH), and Asn-311 contribute to the S-adenosyl-L-methionine site. Catalysis depends on Cys-354, which acts as the S-methylcysteine intermediate.

It belongs to the radical SAM superfamily. RlmN family. [4Fe-4S] cluster serves as cofactor.

It is found in the cytoplasm. It carries out the reaction adenosine(2503) in 23S rRNA + 2 reduced [2Fe-2S]-[ferredoxin] + 2 S-adenosyl-L-methionine = 2-methyladenosine(2503) in 23S rRNA + 5'-deoxyadenosine + L-methionine + 2 oxidized [2Fe-2S]-[ferredoxin] + S-adenosyl-L-homocysteine. The enzyme catalyses adenosine(37) in tRNA + 2 reduced [2Fe-2S]-[ferredoxin] + 2 S-adenosyl-L-methionine = 2-methyladenosine(37) in tRNA + 5'-deoxyadenosine + L-methionine + 2 oxidized [2Fe-2S]-[ferredoxin] + S-adenosyl-L-homocysteine. Its function is as follows. Specifically methylates position 2 of adenine 2503 in 23S rRNA and position 2 of adenine 37 in tRNAs. m2A2503 modification seems to play a crucial role in the proofreading step occurring at the peptidyl transferase center and thus would serve to optimize ribosomal fidelity. The sequence is that of Dual-specificity RNA methyltransferase RlmN from Buchnera aphidicola subsp. Cinara cedri (strain Cc).